The primary structure comprises 318 residues: tRNA dimethylallyltransferase (318 aa).

Gly28–Ser35 contributes to the ATP binding site. A substrate-binding site is contributed by Thr30–Ser35. The tract at residues Asp53–Gln56 is interaction with substrate tRNA.

The protein belongs to the IPP transferase family. In terms of assembly, monomer. Mg(2+) serves as cofactor.

It carries out the reaction adenosine(37) in tRNA + dimethylallyl diphosphate = N(6)-dimethylallyladenosine(37) in tRNA + diphosphate. Its function is as follows. Catalyzes the transfer of a dimethylallyl group onto the adenine at position 37 in tRNAs that read codons beginning with uridine, leading to the formation of N6-(dimethylallyl)adenosine (i(6)A). The sequence is that of tRNA dimethylallyltransferase from Parafrankia sp. (strain EAN1pec).